Here is a 503-residue protein sequence, read N- to C-terminus: ATP-dependent RNA helicase dbp3 (503 aa).

Positions 1-13 (MGKRVSHNEGADR) are enriched in basic and acidic residues. Residues 1-37 (MGKRVSHNEGADRRPKKKAKNEKPEKETMESPAADVT) are disordered. Positions 104-112 (SFASPTPIQ) match the Q motif motif. The Helicase ATP-binding domain maps to 116-292 (WPLLFAGRDV…ATFMTSAVTV (177 aa)). 129-136 (AETGSGKT) contributes to the ATP binding site. The DEAD box signature appears at 239 to 242 (DEAD). In terms of domain architecture, Helicase C-terminal spans 323–472 (RLVQLLSENQ…EVPQELLKFG (150 aa)).

Belongs to the DEAD box helicase family. DDX5/DBP2 subfamily.

It localises to the nucleus. It is found in the nucleolus. The enzyme catalyses ATP + H2O = ADP + phosphate + H(+). In terms of biological role, ATP-dependent RNA helicase required for 60S ribosomal subunit synthesis. Involved in efficient pre-rRNA processing, predominantly at site A3, which is necessary for the normal formation of 25S and 5.8S rRNAs. The protein is ATP-dependent RNA helicase dbp3 (dbp3) of Aspergillus clavatus (strain ATCC 1007 / CBS 513.65 / DSM 816 / NCTC 3887 / NRRL 1 / QM 1276 / 107).